A 285-amino-acid polypeptide reads, in one-letter code: Phosphatidylglycerol--prolipoprotein diacylglyceryl transferase (285 aa).

The next 4 helical transmembrane spans lie at 26 to 46 (IALH…WWYV), 71 to 91 (FVVW…VLIW), 107 to 127 (WDGG…IIWF), and 133 to 153 (INIW…IGVV). Arg-154 lines the a 1,2-diacyl-sn-glycero-3-phospho-(1'-sn-glycerol) pocket. Helical transmembrane passes span 194-214 (LMEG…FKAF), 218-238 (GTVA…SEIF), and 256-276 (GFTY…YAIF).

This sequence belongs to the Lgt family.

The protein localises to the cell inner membrane. The enzyme catalyses L-cysteinyl-[prolipoprotein] + a 1,2-diacyl-sn-glycero-3-phospho-(1'-sn-glycerol) = an S-1,2-diacyl-sn-glyceryl-L-cysteinyl-[prolipoprotein] + sn-glycerol 1-phosphate + H(+). Its pathway is protein modification; lipoprotein biosynthesis (diacylglyceryl transfer). Its function is as follows. Catalyzes the transfer of the diacylglyceryl group from phosphatidylglycerol to the sulfhydryl group of the N-terminal cysteine of a prolipoprotein, the first step in the formation of mature lipoproteins. In Bartonella bacilliformis (strain ATCC 35685 / KC583 / Herrer 020/F12,63), this protein is Phosphatidylglycerol--prolipoprotein diacylglyceryl transferase.